Reading from the N-terminus, the 272-residue chain is Undecaprenyl-diphosphatase (272 aa).

Helical transmembrane passes span 1-21, 39-59, 91-111, 117-137, 151-171, 196-216, 228-248, and 251-271; these read MSTL…FLPI, QGLA…MMYF, WWIL…KDFI, SALV…FADI, LGLK…IPGT, FLLS…KLIL, LGSL…LILL, and LGMM…LWFI.

It belongs to the UppP family.

It localises to the cell inner membrane. It carries out the reaction di-trans,octa-cis-undecaprenyl diphosphate + H2O = di-trans,octa-cis-undecaprenyl phosphate + phosphate + H(+). Its function is as follows. Catalyzes the dephosphorylation of undecaprenyl diphosphate (UPP). Confers resistance to bacitracin. The sequence is that of Undecaprenyl-diphosphatase from Colwellia psychrerythraea (strain 34H / ATCC BAA-681) (Vibrio psychroerythus).